Reading from the N-terminus, the 184-residue chain is Lactoylglutathione lyase (184 aa).

Ala2 is subject to N-acetylalanine. Cys19 and Cys20 are disulfide-bonded. Positions 31 to 177 (LLQQTMLRIK…DGYWIEILNP (147 aa)) constitute a VOC domain. The substrate site is built by Gln34 and Arg38. A Zn(2+)-binding site is contributed by Gln34. Lys88 is modified (N6-succinyllysine). Glu100 is a Zn(2+) binding site. Position 104 (Asn104) interacts with substrate. Thr107 carries the phosphothreonine modification. 2 residues coordinate substrate: Arg123 and His127. Residue His127 participates in Zn(2+) binding. An S-glutathionyl cysteine modification is found at Cys139. Lys148 carries the N6-acetyllysine; alternate modification. Position 148 is an N6-succinyllysine; alternate (Lys148). 157 to 158 (KM) is a substrate binding site. Position 173 (Glu173) interacts with Zn(2+). The active-site Proton donor/acceptor is Glu173.

It belongs to the glyoxalase I family. As to quaternary structure, homodimer. It depends on Zn(2+) as a cofactor. In terms of processing, glutathionylation at Cys-139 inhibits enzyme activity. Phosphorylated at Thr-107 in the presence of CaMK2. However, this is a consensus site for phosphorylation by CK2 so phosphorylation may be mediated by CK2 rather than CaMK2. Phosphorylation is induced by TNF and suppresses the TNF-induced transcriptional activity of NF-kappa-B. Post-translationally, exists in a nitric oxide (NO)-modified form. The exact nature of the modification is unknown, but it suppresses the TNF-induced transcriptional activity of NF-kappa-B.

The enzyme catalyses (R)-S-lactoylglutathione = methylglyoxal + glutathione. It functions in the pathway secondary metabolite metabolism; methylglyoxal degradation; (R)-lactate from methylglyoxal: step 1/2. With respect to regulation, subject to competitive inhibition by methyl-gerfelin. Functionally, catalyzes the conversion of hemimercaptal, formed from methylglyoxal and glutathione, to S-lactoylglutathione. Involved in the regulation of TNF-induced transcriptional activity of NF-kappa-B. Required for normal osteoclastogenesis. In Mus musculus (Mouse), this protein is Lactoylglutathione lyase (Glo1).